The sequence spans 181 residues: Ferritin heavy chain (181 aa).

A Ferritin-like diiron domain is found at 10-159 (QNYHQDCEAA…DHVTNLRKMG (150 aa)). 5 residues coordinate Fe cation: Glu27, Glu62, His65, Glu107, and Gln141.

It belongs to the ferritin family. In terms of assembly, oligomer of 24 subunits. There are two types of subunits: L (light) chain and H (heavy) chain. The major chain can be light or heavy, depending on the species and tissue type. The functional molecule forms a roughly spherical shell with a diameter of 12 nm and contains a central cavity into which the insoluble mineral iron core is deposited. Expressed in erythroblasts (at protein level). Expressed in heart, liver, spleen, lung, kidney, large intestine, small intestine, muscle, glandular stomach, ovary and oviduct.

Its subcellular location is the cytoplasm. The protein resides in the lysosome. It localises to the cytoplasmic vesicle. It is found in the autophagosome. It catalyses the reaction 4 Fe(2+) + O2 + 4 H(+) = 4 Fe(3+) + 2 H2O. Functionally, stores iron in a soluble, non-toxic, readily available form. Important for iron homeostasis. Has ferroxidase activity. Iron is taken up in the ferrous form and deposited as ferric hydroxides after oxidation. Also plays a role in delivery of iron to cells. Mediates iron uptake in capsule cells of the developing kidney. Delivery to lysosomes is mediated by the cargo receptor NCOA4 for autophagic degradation and release of iron. Its function is as follows. Inhibits translation of various mRNA species in vitro. Associates with a 35S prosome-like particle that contains non-translated mRNAs in a complex with proteins. May be involved in pre-translational regulation of some mRNA. This Anas platyrhynchos (Mallard) protein is Ferritin heavy chain.